Consider the following 376-residue polypeptide: Endoplasmic reticulum-Golgi intermediate compartment protein 2 (376 aa).

Over 1-33 (MRRLNKKKALNFVRELDAFPKVPESYVETTASG) the chain is Cytoplasmic. The helical transmembrane segment at 34–54 (GTVSLLAFTAMALLAFFEFFV) threads the bilayer. Residues 55–318 (YRDTWMKYEY…PFWQFLVRLC (264 aa)) are Lumenal-facing. Residues 319–339 (GIIGGIFSTTGMLHNLVGFCV) form a helical membrane-spanning segment. At 340–376 (DVVCCRFKLGVYKPKSMSDFDGQINSLTPLLSENAEQ) the chain is on the cytoplasmic side.

It belongs to the ERGIC family.

Its subcellular location is the endoplasmic reticulum-Golgi intermediate compartment membrane. It is found in the golgi apparatus. The protein resides in the cis-Golgi network membrane. It localises to the endoplasmic reticulum membrane. In terms of biological role, possible role in transport between endoplasmic reticulum and Golgi. This is Endoplasmic reticulum-Golgi intermediate compartment protein 2 (ergic2) from Danio rerio (Zebrafish).